The primary structure comprises 161 residues: Spermidine N(1)-acetyltransferase (161 aa).

Residues 3–160 (IEIRKLSIED…SDFIMEKKYE (158 aa)) form the N-acetyltransferase domain. Residues 92 to 94 (LYL), 99 to 104 (THKKIG), asparagine 131, and serine 136 each bind acetyl-CoA. Residue tyrosine 138 is the Proton donor of the active site. Lysine 140 contacts acetyl-CoA.

This sequence belongs to the acetyltransferase family. Monomer or homodimer.

It carries out the reaction an alkane-alpha,omega-diamine + acetyl-CoA = an N-acetylalkane-alpha,omega-diamine + CoA + H(+). Functionally, involved in the protection against polyamine toxicity by regulating their concentration. Could also be involved in the negative control of sporulation as well as production of degradative enzymes such as alpha-amylase, levansucrase and alkaline phosphatase. Catalyzes the transfer of an acetyl group from acetyl coenzyme A (AcCoA) to an acceptor substrate and release both CoA and the acetylated product. It can use a variety of substrates including spermidine, L-tryptophan, L-leucine, L-lysine, dopamine and tyramine. The chain is Spermidine N(1)-acetyltransferase from Thermoplasma acidophilum (strain ATCC 25905 / DSM 1728 / JCM 9062 / NBRC 15155 / AMRC-C165).